Here is a 530-residue protein sequence, read N- to C-terminus: Autoinducer-2 kinase (530 aa).

This sequence belongs to the FGGY kinase family.

The protein localises to the cytoplasm. It catalyses the reaction (S)-4,5-dihydroxypentane-2,3-dione + ATP = (2S)-2-hydroxy-3,4-dioxopentyl phosphate + ADP + H(+). In terms of biological role, catalyzes the phosphorylation of autoinducer-2 (AI-2) to phospho-AI-2, which subsequently inactivates the transcriptional regulator LsrR and leads to the transcription of the lsr operon. Phosphorylates the ring-open form of (S)-4,5-dihydroxypentane-2,3-dione (DPD), which is the precursor to all AI-2 signaling molecules, at the C5 position. This Escherichia coli (strain K12 / DH10B) protein is Autoinducer-2 kinase.